A 252-amino-acid chain; its full sequence is Chitooligosaccharide deacetylase (252 aa).

Mg(2+) contacts are provided by His61 and His125.

The protein belongs to the YdjC deacetylase family. ChbG subfamily. Homodimer. Requires Mg(2+) as cofactor.

It localises to the cytoplasm. It carries out the reaction N,N'-diacetylchitobiose + H2O = N-acetyl-beta-D-glucosaminyl-(1-&gt;4)-D-glucosamine + acetate. The catalysed reaction is diacetylchitobiose-6'-phosphate + H2O = N'-monoacetylchitobiose-6'-phosphate + acetate. It functions in the pathway glycan degradation; chitin degradation. Involved in the degradation of chitin. ChbG is essential for growth on the acetylated chitooligosaccharides chitobiose and chitotriose but is dispensable for growth on cellobiose and chitosan dimer, the deacetylated form of chitobiose. Deacetylation of chitobiose-6-P and chitotriose-6-P is necessary for both the activation of the chb promoter by the regulatory protein ChbR and the hydrolysis of phosphorylated beta-glucosides by the phospho-beta-glucosidase ChbF. Catalyzes the removal of only one acetyl group from chitobiose-6-P to yield monoacetylchitobiose-6-P, the inducer of ChbR and the substrate of ChbF. In Klebsiella pneumoniae (strain 342), this protein is Chitooligosaccharide deacetylase.